Consider the following 334-residue polypeptide: Ferredoxin--NADP reductase (334 aa).

FAD contacts are provided by D33, Q41, Y46, A86, F120, D286, and T327.

Belongs to the ferredoxin--NADP reductase type 2 family. Homodimer. Requires FAD as cofactor.

It carries out the reaction 2 reduced [2Fe-2S]-[ferredoxin] + NADP(+) + H(+) = 2 oxidized [2Fe-2S]-[ferredoxin] + NADPH. The polypeptide is Ferredoxin--NADP reductase (Rickettsia prowazekii (strain Madrid E)).